A 73-amino-acid polypeptide reads, in one-letter code: MILRVKVKPNAKTVSVEQLEDKSLKISIKSPPVNGKANEELIKVLSEFLKVSKSKINIKAGKSSREKLVEIYD.

This sequence belongs to the UPF0235 family.

This is UPF0235 protein HY04AAS1_1378 from Hydrogenobaculum sp. (strain Y04AAS1).